A 422-amino-acid polypeptide reads, in one-letter code: Cytochrome P-450 monooxygenase DoxA (422 aa).

Cys-369 lines the heme pocket.

Belongs to the cytochrome P450 family. Monomer. Heme serves as cofactor.

It localises to the cytoplasm. It catalyses the reaction 13-deoxydaunorubicin + NADPH + O2 + H(+) = 13-dihydrodaunorubicin + NADP(+) + H2O. It carries out the reaction 13-dihydrodaunorubicin + NADPH + O2 + H(+) = daunorubicin + NADP(+) + 2 H2O. The enzyme catalyses 13-deoxycarminomycin + NADPH + O2 + H(+) = 13-dihydrocarminomycin + NADP(+) + H2O. The catalysed reaction is 13-dihydrocarminomycin + NADPH + O2 + H(+) = carminomycin + NADP(+) + 2 H2O. It functions in the pathway antibiotic biosynthesis; daunorubicin biosynthesis. It participates in antibiotic biosynthesis; carminomycin biosynthesis. Strongly inhibited by dithiothreitol and high ionic strength buffers. Its function is as follows. Involved in the biosynthesis of the anthracyclines carminomycin and daunorubicin (daunomycin) which are aromatic polyketide antibiotics that exhibit high cytotoxicity and are widely applied in the chemotherapy of a variety of cancers. In vivo, DoxA catalyzes the C-13 hydroxylation of 13-deoxycarminomycin and 13-deoxydaunorubicin to yield 13-dihydrocarminomycin and 13-dihydrodaunorubicin, respectively, as well as the oxidation of these 13-dihydro-anthracyclines to their respective 13-keto forms, carminomycin and daunorubicin. In vitro, it also catalyzes the C-14 hydroxylation of daunorubicin to form doxorubicin (adriamycin), although this strain is not a doxorubicin producer. It is not able to accept anthracyclinones (aglycones) and anthracyclines with a 10-carbomethoxyl moiety. 13-oxidation of the anthracyclines possessing the 4-methoxy substitution is greatly favored. The anthracycline analog desacetyladriamycin can be oxidized to 10-hydroxydesacetyladriamycin. It can only use NADP. DoxA acts jointly with DauV. This Streptomyces sp. (strain C5) protein is Cytochrome P-450 monooxygenase DoxA (doxA).